A 511-amino-acid chain; its full sequence is Bifunctional purine biosynthesis protein PurH (511 aa).

The MGS-like domain maps to 1 to 146 (MTKRALVSVS…KNHADVTVVV (146 aa)).

This sequence belongs to the PurH family.

The catalysed reaction is (6R)-10-formyltetrahydrofolate + 5-amino-1-(5-phospho-beta-D-ribosyl)imidazole-4-carboxamide = 5-formamido-1-(5-phospho-D-ribosyl)imidazole-4-carboxamide + (6S)-5,6,7,8-tetrahydrofolate. It catalyses the reaction IMP + H2O = 5-formamido-1-(5-phospho-D-ribosyl)imidazole-4-carboxamide. It participates in purine metabolism; IMP biosynthesis via de novo pathway; 5-formamido-1-(5-phospho-D-ribosyl)imidazole-4-carboxamide from 5-amino-1-(5-phospho-D-ribosyl)imidazole-4-carboxamide (10-formyl THF route): step 1/1. The protein operates within purine metabolism; IMP biosynthesis via de novo pathway; IMP from 5-formamido-1-(5-phospho-D-ribosyl)imidazole-4-carboxamide: step 1/1. This is Bifunctional purine biosynthesis protein PurH from Shouchella clausii (strain KSM-K16) (Alkalihalobacillus clausii).